The sequence spans 305 residues: UDP-3-O-acyl-N-acetylglucosamine deacetylase (305 aa).

3 residues coordinate Zn(2+): histidine 79, histidine 238, and aspartate 242. Histidine 265 functions as the Proton donor in the catalytic mechanism.

Belongs to the LpxC family. It depends on Zn(2+) as a cofactor.

It carries out the reaction a UDP-3-O-[(3R)-3-hydroxyacyl]-N-acetyl-alpha-D-glucosamine + H2O = a UDP-3-O-[(3R)-3-hydroxyacyl]-alpha-D-glucosamine + acetate. The protein operates within glycolipid biosynthesis; lipid IV(A) biosynthesis; lipid IV(A) from (3R)-3-hydroxytetradecanoyl-[acyl-carrier-protein] and UDP-N-acetyl-alpha-D-glucosamine: step 2/6. Its function is as follows. Catalyzes the hydrolysis of UDP-3-O-myristoyl-N-acetylglucosamine to form UDP-3-O-myristoylglucosamine and acetate, the committed step in lipid A biosynthesis. The protein is UDP-3-O-acyl-N-acetylglucosamine deacetylase of Haemophilus influenzae (strain PittEE).